A 419-amino-acid chain; its full sequence is L-rhamnose isomerase (419 aa).

Mn(2+)-binding residues include His262, Asp294, and Asp296.

The protein belongs to the rhamnose isomerase family. In terms of assembly, homotetramer. Mn(2+) serves as cofactor.

Its subcellular location is the cytoplasm. It carries out the reaction L-rhamnopyranose = L-rhamnulose. The protein operates within carbohydrate degradation; L-rhamnose degradation; glycerone phosphate from L-rhamnose: step 1/3. Functionally, catalyzes the interconversion of L-rhamnose and L-rhamnulose. In Salmonella agona (strain SL483), this protein is L-rhamnose isomerase.